A 1015-amino-acid chain; its full sequence is DExH-box ATP-dependent RNA helicase DExH8 (1015 aa).

A Helicase ATP-binding domain is found at 36–197 (IDKILENRVT…FKELGRGERV (162 aa)). An ATP-binding site is contributed by 49–56 (GEPGCGKS). The DEVH box motif lies at 144–147 (DEVH). The 166-residue stretch at 254–419 (LIHDLILYIH…KLSLRQQVLH (166 aa)) folds into the Helicase C-terminal domain. C3H1-type zinc fingers lie at residues 727-753 (YGEA…THTL) and 754-782 (QSTR…HAMR).

This sequence belongs to the DExH box helicase family.

The catalysed reaction is ATP + H2O = ADP + phosphate + H(+). The sequence is that of DExH-box ATP-dependent RNA helicase DExH8 from Arabidopsis thaliana (Mouse-ear cress).